A 1278-amino-acid polypeptide reads, in one-letter code: Mediator of RNA polymerase II transcription subunit 16 (1278 aa).

Positions 1–10 (MNQQNPEEEV) are enriched in acidic residues. Disordered stretches follow at residues 1–21 (MNQQ…GGGI), 530–557 (TKDF…GDEK), and 839–861 (SAGT…SPAT). The segment covering 547–557 (APKEPDSGDEK) has biased composition (basic and acidic residues). Positions 841-861 (GTGSNRNNVTSPTQNASSPAT) are enriched in polar residues.

This sequence belongs to the plant Mediator complex subunit 16 family. In terms of assembly, component of the Mediator complex.

The protein localises to the nucleus. Functionally, component of the Mediator complex, a coactivator involved in the regulated transcription of nearly all RNA polymerase II-dependent genes. Mediator functions as a bridge to convey information from gene-specific regulatory proteins to the basal RNA polymerase II transcription machinery. The Mediator complex, having a compact conformation in its free form, is recruited to promoters by direct interactions with regulatory proteins and serves for the assembly of a functional preinitiation complex with RNA polymerase II and the general transcription factors. Involved in the regulation of the circadian clock, in the control of flowering time, in freezing- and osmotic-stress tolerance and in both salicylic acid- and jasmonate-mediated defense gene expression. The sequence is that of Mediator of RNA polymerase II transcription subunit 16 (MED16) from Arabidopsis thaliana (Mouse-ear cress).